The primary structure comprises 343 residues: Heat-inducible transcription repressor HrcA (343 aa).

It belongs to the HrcA family.

Its function is as follows. Negative regulator of class I heat shock genes (grpE-dnaK-dnaJ and groELS operons). Prevents heat-shock induction of these operons. The sequence is that of Heat-inducible transcription repressor HrcA from Mycobacterium marinum (strain ATCC BAA-535 / M).